A 646-amino-acid polypeptide reads, in one-letter code: MTISTTALGGGATTATRKQVEAKYEEERQIQLQSRGMVEDIEITRNASFEQFAKDPWAAPKQVDVEIQRERLLQQAHHKIIIIGAGFGGLLFAVRLIQTGKFKADDIILVDSAAGFGGTWYWNRYPGLMCDTESYIYMPLLEETGYMPRNKYASGNEIREHAERIAEKYALSERAIFRTVVQSLDWEEEGKVWKIAGVKLGKNDECQQPFQLIADFPIMASGAFASPRVPNYPNIFDYKGKLFHTARWDYKYTGGSIENPKMSGLADKRVAIIGTGATAIQIVPQLAKNSRELFVFQRTPAAVDVRNNYPTDPARFKSEIQGDGPGWQRRRQINFNAFTCNEKTLPTDNKIGDGWTRMPSFSVLIGGPQSLEPDYIDQIRPIDMARQSEIRSRVHKLVESTAIADSLTPWYPGWCKRPCFHDEYLQSFNSSNVQLVDIRHDGISRFTPNGLVANGVEYELDAIILSTGYTVPVTRASPSGRANITVTGRRGVTMEEKWANGLATLHGVMTRDLPNLFFAGTSQAGACVNLTYALDQNAIHVAHILSEAVKRQPSDCTKLVIQPTHEGEEAWTMEILQRAAGFRGIAGCTPGYLNGYGMDASSLKPEEQMNMARLAAWGEGIASYVDALEGWRSEGQLEGVEMTFFA.

N-linked (GlcNAc...) asparagine glycosylation is present at Asn-46. A helical membrane pass occupies residues 80–97; it reads IIIIGAGFGGLLFAVRLI. Residues 119–122, 131–132, and Tyr-137 each bind FAD; these read TWYW and DT. 129–131 provides a ligand contact to NADP(+); it reads MCD. Residues 275 to 281 and 298 to 299 each bind NADP(+); these read TGATAIQ and RT. 3 N-linked (GlcNAc...) asparagine glycosylation sites follow: Asn-429, Asn-483, and Asn-529.

This sequence belongs to the FAD-binding monooxygenase family. FAD serves as cofactor.

The protein localises to the membrane. The enzyme catalyses preaustinoid A + AH2 + O2 = preaustinoid A1 + A + H2O. It participates in secondary metabolite biosynthesis; terpenoid biosynthesis. Its function is as follows. FAD-binding monooxygenase; part of the gene cluster that mediates the biosynthesis of paraherquonin, a meroterpenoid with a unique, highly congested hexacyclic molecular architecture. The first step of the pathway is the synthesis of 3,5-dimethylorsellinic acid (DMOA) by the polyketide synthase prhL. Synthesis of DMOA is followed by farnesylation by the prenyltransferase prhE, methylesterification by the methyl-transferase prhM, epoxidation of the prenyl chain by the flavin-dependent monooxygenase prhF, and cyclization of the farnesyl moiety by the terpene cyclase prhH, to yield the tetracyclic intermediate, protoaustinoid A. The short chain dehydrogenase prhI then oxidizes the C-3 alcohol group of the terpene cyclase product to transform protoaustinoid A into protoaustinoid B. The FAD-binding monooxygenase prhJ catalyzes the oxidation of protoaustinoid B into preaustinoid A which is further oxidized into preaustinoid A1 by FAD-binding monooxygenase phrK. Finally, prhA leads to berkeleydione via the berkeleyone B intermediate. PrhA is a multifunctional dioxygenase that first desaturates at C5-C6 to form berkeleyone B, followed by rearrangement of the A/B-ring to form the cycloheptadiene moiety in berkeleydione. Berkeleydione serves as the key intermediate for the biosynthesis of paraherquonin as well as many other meroterpenoids. The cytochrome P450 monooxygenases prhB, prhD, and prhN, as well as the isomerase prhC, are probably involved in the late stage of paraherquonin biosynthesis, after the production of berkeleydione. Especially prhC might be a multifunctional enzyme that catalyzes the D-ring expansion via intramolecular methoxy rearrangement, as well as the hydrolysis of the expanded D-ring. This is FAD-binding monooxygenase prhK from Penicillium brasilianum.